A 329-amino-acid polypeptide reads, in one-letter code: Mas-related G-protein coupled receptor member X2 (329 aa).

The Extracellular segment spans residues 1–33 (MDPTTPAWGTESTTMDGNDQSLPLLCDKEALIP). Residues 34 to 54 (VFLILFIALVGLVGNGFVLWL) form a helical membrane-spanning segment. The Cytoplasmic segment spans residues 55–63 (LGFRMSRNA). Residues 64-84 (FSVYVLSLAGADFLFLCFQII) form a helical membrane-spanning segment. Residues 85–96 (NCLVYLRDFFCS) lie on the Extracellular side of the membrane. A helical transmembrane segment spans residues 97 to 117 (ISINFPSXFTTVMTCAYLAGL). Topologically, residues 118–144 (SMLSTISTERCLSVLWPIWYRCRRPRH) are cytoplasmic. The helical transmembrane segment at 145-165 (LSAVVCVLLWALSLLLSILEG) threads the bilayer. Residues 166–184 (KFCGFLFSDGDFGWCQIFD) are Extracellular-facing. Residues 185 to 205 (FITAAWLIFLFVVLCASSLAL) form a helical membrane-spanning segment. Residues 206–228 (LVRILCGSRGLPLTRLYLTILLT) are Cytoplasmic-facing. A helical transmembrane segment spans residues 229–249 (VLVFLLCGLPFGIQWFLILGF). At 250-263 (WNSDVLLCHIHLVS) the chain is on the extracellular side. Residues 264–284 (VVLSSLNSSANPIIYFFVGSF) traverse the membrane as a helical segment. Over 285–329 (RKQWRLQQPILKLAFQRALQDTAEVDHSEGCFPQGTSEMSRSSLV) the chain is Cytoplasmic.

The protein belongs to the G-protein coupled receptor 1 family. Mas subfamily.

The protein localises to the cell membrane. Its function is as follows. Mast cell-specific receptor for basic secretagogues, i.e. cationic amphiphilic drugs, as well as endo- or exogenous peptides, consisting of a basic head group and a hydrophobic core. Recognizes and binds small molecules containing a cyclized tetrahydroisoquinoline (THIQ), such as non-steroidal neuromuscular blocking drugs (NMBDs), including tubocurarine and atracurium. In response to these compounds, mediates pseudo-allergic reactions characterized by histamine release, inflammation and airway contraction. This Hoolock hoolock (Western hoolock gibbon) protein is Mas-related G-protein coupled receptor member X2 (MRGPRX2).